Here is a 458-residue protein sequence, read N- to C-terminus: UDP-N-acetylmuramate--L-alanine ligase (458 aa).

Residue 115 to 121 coordinates ATP; sequence GSHGKTT.

The protein belongs to the MurCDEF family.

The protein localises to the cytoplasm. The enzyme catalyses UDP-N-acetyl-alpha-D-muramate + L-alanine + ATP = UDP-N-acetyl-alpha-D-muramoyl-L-alanine + ADP + phosphate + H(+). It participates in cell wall biogenesis; peptidoglycan biosynthesis. Cell wall formation. This chain is UDP-N-acetylmuramate--L-alanine ligase, found in Anaeromyxobacter sp. (strain Fw109-5).